A 103-amino-acid chain; its full sequence is UPF0145 protein Rsph17025_2361 (103 aa).

The protein belongs to the UPF0145 family.

The chain is UPF0145 protein Rsph17025_2361 from Cereibacter sphaeroides (strain ATCC 17025 / ATH 2.4.3) (Rhodobacter sphaeroides).